Consider the following 523-residue polypeptide: Cytoplasmic dynein 1 light intermediate chain 1 (523 aa).

The disordered stretch occupies residues 1–45; that stretch reads MAAVGRVGSFGSSPPGLASTYASGPLANELASGSGGPAAGDDEDG. Residue 74–81 coordinates ATP; that stretch reads GEDGAGKT. A Phosphoserine modification is found at S207. Residue T213 is modified to Phosphothreonine. 2 disordered regions span residues 387–434 and 457–523; these read PPTA…DPNM and GSPG…GEAS. Phosphoserine occurs at positions 398 and 405. Phosphothreonine is present on T408. Residues S412, S419, S421, and S427 each carry the phosphoserine modification. Residues 412–421 are compositionally biased toward low complexity; it reads SVSSNVASVS. Positions 458-473 are enriched in gly residues; it reads SPGGPGVGGSPGGGAA. Positions 474-483 are enriched in low complexity; that stretch reads GASTSLPPSA. Phosphoserine is present on residues S486 and S510. Residues T512 and T513 each carry the phosphothreonine modification. S516 is subject to Phosphoserine.

Belongs to the dynein light intermediate chain family. In terms of assembly, homodimer. The cytoplasmic dynein 1 complex consists of two catalytic heavy chains (HCs) and a number of non-catalytic subunits presented by intermediate chains (ICs), light intermediate chains (LICs) and light chains (LCs); the composition seems to vary in respect to the IC, LIC and LC composition. The heavy chain homodimer serves as a scaffold for the probable homodimeric assembly of the respective non-catalytic subunits. The ICs and LICs bind directly to the HC dimer and the LCs assemble on the IC dimer. Self-associates. Interacts with DYNC1H1; DYNC1LI1 and DYNC1LI2 bind mutually exclusive to DYNC1H1. Interacts with PCNT. Forms a complex with RAB11FIP3 and RAB11A1; the interaction between DYNC1LI1 and RAB11FIP3 is direct and induces DYNC1LI1 localization onto endosomal membrane; the complex regulates endocytic trafficking. Interacts with RUFY3. Post-translationally, phosphorylated during mitosis but not in interphase.

It localises to the cytoplasm. It is found in the chromosome. Its subcellular location is the centromere. The protein resides in the kinetochore. The protein localises to the cytoskeleton. It localises to the spindle pole. It is found in the recycling endosome membrane. Functionally, acts as one of several non-catalytic accessory components of the cytoplasmic dynein 1 complex that are thought to be involved in linking dynein to cargos and to adapter proteins that regulate dynein function. Cytoplasmic dynein 1 acts as a motor for the intracellular retrograde motility of vesicles and organelles along microtubules. May play a role in binding dynein to membranous organelles or chromosomes. Probably involved in the microtubule-dependent transport of pericentrin. Is required for progress through the spindle assembly checkpoint. The phosphorylated form appears to be involved in the selective removal of MAD1L1 and MAD1L2 but not BUB1B from kinetochores. Forms a functional Rab11/RAB11FIP3/dynein complex onto endosomal membrane that regulates the movement of peripheral sorting endosomes (SE) along microtubule tracks toward the microtubule organizing center/centrosome, generating the endosomal recycling compartment (ERC). The sequence is that of Cytoplasmic dynein 1 light intermediate chain 1 (Dync1li1) from Rattus norvegicus (Rat).